A 510-amino-acid polypeptide reads, in one-letter code: MEKRYQQLFKGKRIDFPLATGAASHVSLTYDEKKNPYLLCWTYIYQEKPEFTVPLKGCRIINNITEIGPCIHIITSNEEYQFQCRSKEEFDEMSQFFNMLGYPILGFKNVYVLNKKIGKGSFSTAYIGTNILYGNRVVVKEVDKSKVKESNVYTEIEVLRKVMHKYIIKLISAYEQEGFVYLVLEYLKGGELFEYLNNNGPYTEQVAKKAMKRVLIALEALHSNGVVHRDLKMENLMLENPNDPSSLKIIDFGLASFLNSPSMNMRCGSPGYVAPEILKCASYGTKVDIFSLGVILFNILCGYPPFRGNNVKEIFKKNMRCHISFNTKHWINKSESVKEIILWMCCKNPDDRCTALQALGHQWFLPKLTDMHMTANINELKRNEAIVHKSNDQQDMCKKCKHFNNTQNDDIYNNNNNNNQLDPNKNHKNNYNDYKNYFDTMLKIDDKYSENLIKDKTSMDSISLNKKDYDAYLVHSNEHDTVVLHGKCQTTKNSSSLLSYKCSRRSPPQN.

Residues 111–364 (YVLNKKIGKG…ALQALGHQWF (254 aa)) form the Protein kinase domain. ATP is bound by residues 117–125 (IGKGSFSTA) and K140. D230 acts as the Proton acceptor in catalysis. Residues 408–428 (NDDIYNNNNNNNQLDPNKNHK) are disordered.

The protein belongs to the protein kinase superfamily. Ser/Thr protein kinase family.

It is found in the membrane. It catalyses the reaction L-seryl-[protein] + ATP = O-phospho-L-seryl-[protein] + ADP + H(+). The enzyme catalyses L-threonyl-[protein] + ATP = O-phospho-L-threonyl-[protein] + ADP + H(+). This is Probable serine/threonine-protein kinase 2 (PK2) from Plasmodium falciparum (isolate K1 / Thailand).